The chain runs to 158 residues: Cyclic pyranopterin monophosphate synthase (158 aa).

Residues L76–H78 and M114–E115 each bind substrate. The active site involves D129.

Belongs to the MoaC family. As to quaternary structure, homohexamer; trimer of dimers.

The enzyme catalyses (8S)-3',8-cyclo-7,8-dihydroguanosine 5'-triphosphate = cyclic pyranopterin phosphate + diphosphate. It functions in the pathway cofactor biosynthesis; molybdopterin biosynthesis. Catalyzes the conversion of (8S)-3',8-cyclo-7,8-dihydroguanosine 5'-triphosphate to cyclic pyranopterin monophosphate (cPMP). This Shewanella halifaxensis (strain HAW-EB4) protein is Cyclic pyranopterin monophosphate synthase.